The chain runs to 226 residues: MSSDAAAQERLPGLLLVLSAPSGAGKTTLAHRLREASPDAVFSISATTRAPRGAEREGVDYHFVTAERFTELVAQGAFAEWAEVHGQRYGTLRATVDEALAAGKLALFDIDVQGGAQIKAAWPQQAATVLVLPPDEAELERRLRGRDTDSDETIRRRLVAARAEVARGLGSYDYVVVNDVLEGALAQLQAIVRHERLRHAGRWDPEAARVAEACRRSAAPLGGWAS.

The Guanylate kinase-like domain maps to 13 to 193 (GLLLVLSAPS…ALAQLQAIVR (181 aa)). Position 20–27 (20–27 (APSGAGKT)) interacts with ATP.

The protein belongs to the guanylate kinase family.

The protein localises to the cytoplasm. It catalyses the reaction GMP + ATP = GDP + ADP. Essential for recycling GMP and indirectly, cGMP. In Anaeromyxobacter dehalogenans (strain 2CP-C), this protein is Guanylate kinase.